The following is a 469-amino-acid chain: Phosphatidylinositol 4-kinase type 2-alpha (469 aa).

2 disordered regions span residues 1–30 (MDETSPLVSPDRDQTEYSYQSQCSPGATVP) and 50–72 (TATSCGSAASGPSPPGSPCDQER). The span at 16 to 25 (EYSYQSQCSP) shows a compositional bias: polar residues. Residues 50–60 (TATSCGSAASG) show a composition bias toward low complexity. In terms of domain architecture, PI3K/PI4K catalytic spans 115-443 (DILPERISQG…VQTPPVIVET (329 aa)). Residues 121–127 (ISQGSSG) are G-loop. ATP is bound by residues 122–128 (SQGSSGS) and Lys-143. Residues 148–150 (EPY) are important for substrate binding. Residues 156–169 (KWTKWLQKLCCPCC) form an important for interaction with membranes region. S-palmitoyl cysteine attachment occurs at residues Cys-165, Cys-166, Cys-168, and Cys-169. Residue 252–255 (QIFV) participates in ATP binding. Positions 259–267 (KDADYWLRR) are important for interaction with membranes. The segment at 296-304 (RNTDRGNDN) is catalytic loop. The interval 334-354 (AIDNGLAFPLKHPDSWRAYPF) is activation loop. Asp-336 lines the ATP pocket. The important for interaction with membranes stretch occupies residues 349–358 (WRAYPFYWAW).

The protein belongs to the PI3/PI4-kinase family. Type II PI4K subfamily.

The protein resides in the golgi apparatus. Its subcellular location is the trans-Golgi network membrane. It is found in the membrane raft. It localises to the endosome. The protein localises to the endosome membrane. The protein resides in the cytoplasmic vesicle. Its subcellular location is the cell projection. It is found in the dendrite. It localises to the presynaptic cell membrane. The protein localises to the synapse. The protein resides in the synaptosome. Its subcellular location is the mitochondrion. It is found in the membrane. It localises to the cell membrane. The protein localises to the perikaryon. The protein resides in the neuron projection. It carries out the reaction a 1,2-diacyl-sn-glycero-3-phospho-(1D-myo-inositol) + ATP = a 1,2-diacyl-sn-glycero-3-phospho-(1D-myo-inositol 4-phosphate) + ADP + H(+). In terms of biological role, membrane-bound phosphatidylinositol-4 kinase (PI4-kinase) that catalyzes the phosphorylation of phosphatidylinositol (PI) to phosphatidylinositol 4-phosphate (PI4P), a lipid that plays important roles in endocytosis, Golgi function, protein sorting and membrane trafficking. Besides, phosphorylation of phosphatidylinositol (PI) to phosphatidylinositol 4-phosphate (PI4P) is the first committed step in the generation of phosphatidylinositol 4,5-bisphosphate (PIP2), a precursor of the second messenger inositol 1,4,5-trisphosphate (InsP3). This chain is Phosphatidylinositol 4-kinase type 2-alpha (pi4k2a), found in Xenopus laevis (African clawed frog).